Here is a 369-residue protein sequence, read N- to C-terminus: Holliday junction branch migration complex subunit RuvB (369 aa).

A disordered region spans residues 1–21; that stretch reads MHKNENNRLLGSVSLPDDPDR. Positions 1–184 are large ATPase domain (RuvB-L); it reads MHKNENNRLL…FGIPIRLNFY (184 aa). ATP contacts are provided by residues leucine 23, arginine 24, glycine 65, lysine 68, threonine 69, threonine 70, 131–133, arginine 174, tyrosine 184, and arginine 221; that span reads EDY. Residue threonine 69 participates in Mg(2+) binding. A small ATPAse domain (RuvB-S) region spans residues 185 to 255; that stretch reads TIEELEYIVK…IADTALSRLE (71 aa). A head domain (RuvB-H) region spans residues 258–369; the sequence is HLGLDPLDRN…QKHLWEKDYD (112 aa). DNA is bound by residues arginine 294, arginine 313, and arginine 318.

The protein belongs to the RuvB family. In terms of assembly, homohexamer. Forms an RuvA(8)-RuvB(12)-Holliday junction (HJ) complex. HJ DNA is sandwiched between 2 RuvA tetramers; dsDNA enters through RuvA and exits via RuvB. An RuvB hexamer assembles on each DNA strand where it exits the tetramer. Each RuvB hexamer is contacted by two RuvA subunits (via domain III) on 2 adjacent RuvB subunits; this complex drives branch migration. In the full resolvosome a probable DNA-RuvA(4)-RuvB(12)-RuvC(2) complex forms which resolves the HJ.

It localises to the cytoplasm. It catalyses the reaction ATP + H2O = ADP + phosphate + H(+). Functionally, the RuvA-RuvB-RuvC complex processes Holliday junction (HJ) DNA during genetic recombination and DNA repair, while the RuvA-RuvB complex plays an important role in the rescue of blocked DNA replication forks via replication fork reversal (RFR). RuvA specifically binds to HJ cruciform DNA, conferring on it an open structure. The RuvB hexamer acts as an ATP-dependent pump, pulling dsDNA into and through the RuvAB complex. RuvB forms 2 homohexamers on either side of HJ DNA bound by 1 or 2 RuvA tetramers; 4 subunits per hexamer contact DNA at a time. Coordinated motions by a converter formed by DNA-disengaged RuvB subunits stimulates ATP hydrolysis and nucleotide exchange. Immobilization of the converter enables RuvB to convert the ATP-contained energy into a lever motion, pulling 2 nucleotides of DNA out of the RuvA tetramer per ATP hydrolyzed, thus driving DNA branch migration. The RuvB motors rotate together with the DNA substrate, which together with the progressing nucleotide cycle form the mechanistic basis for DNA recombination by continuous HJ branch migration. Branch migration allows RuvC to scan DNA until it finds its consensus sequence, where it cleaves and resolves cruciform DNA. The protein is Holliday junction branch migration complex subunit RuvB of Bartonella bacilliformis (strain ATCC 35685 / KC583 / Herrer 020/F12,63).